The following is a 600-amino-acid chain: Ligand-dependent nuclear receptor corepressor-like protein (600 aa).

3 disordered regions span residues 1–24, 102–122, and 495–519; these read MEKG…QCRS, SVIG…GQSN, and DGTS…KRGR. Residues 104–122 are compositionally biased toward polar residues; sequence IGSSQSTPTEELSSQGQSN. One can recognise an HTH psq-type domain in the interval 514-566; it reads RKKRGRYRQYDHEIMEEAIAMVMSGKMSVSKAQGIYGVPHSTLEYKVKERSGT. Positions 542-562 form a DNA-binding region, H-T-H motif; it reads VSKAQGIYGVPHSTLEYKVKE. Residues 581 to 600 form a disordered region; the sequence is GLFNMTDSGTGSCKTSSKPV. A compositionally biased stretch (polar residues) spans 583–600; the sequence is FNMTDSGTGSCKTSSKPV.

It localises to the nucleus. Functionally, may act as transcription activator that binds DNA elements with the sequence 5'-CCCTATCGATCGATCTCTACCT-3'. The chain is Ligand-dependent nuclear receptor corepressor-like protein (LCORL) from Gallus gallus (Chicken).